Consider the following 444-residue polypeptide: Probable glycine dehydrogenase (decarboxylating) subunit 1 (444 aa).

It belongs to the GcvP family. N-terminal subunit subfamily. In terms of assembly, the glycine cleavage system is composed of four proteins: P, T, L and H. In this organism, the P 'protein' is a heterodimer of two subunits.

It carries out the reaction N(6)-[(R)-lipoyl]-L-lysyl-[glycine-cleavage complex H protein] + glycine + H(+) = N(6)-[(R)-S(8)-aminomethyldihydrolipoyl]-L-lysyl-[glycine-cleavage complex H protein] + CO2. Functionally, the glycine cleavage system catalyzes the degradation of glycine. The P protein binds the alpha-amino group of glycine through its pyridoxal phosphate cofactor; CO(2) is released and the remaining methylamine moiety is then transferred to the lipoamide cofactor of the H protein. The polypeptide is Probable glycine dehydrogenase (decarboxylating) subunit 1 (Chlorobaculum tepidum (strain ATCC 49652 / DSM 12025 / NBRC 103806 / TLS) (Chlorobium tepidum)).